We begin with the raw amino-acid sequence, 631 residues long: Chaperone protein DnaK (631 aa).

Thr197 carries the phosphothreonine; by autocatalysis modification. The segment at 599–631 (AQSDAGAAGSASEENTTSNEKVVDADFEDVEKK) is disordered. Residues 603–612 (AGAAGSASEE) are compositionally biased toward low complexity.

It belongs to the heat shock protein 70 family.

Functionally, acts as a chaperone. This is Chaperone protein DnaK from Rickettsia bellii (strain RML369-C).